A 483-amino-acid chain; its full sequence is MTLSKVFQYLASLDSKDLEELYKDPWTCQAILRSLPPRSKQYILKMLLVDTYPLSLAKDWSTQASIQQHKESLKKLFDLKIIFLDKINKPIQPQQQQSSQQSSSQQQQQQQQQQQQTEQTIRLNPLFQDNIKRSLVQVNQVIFSNNSSIKDNHKPPSIDDLDSYSKSQWEKVLYFLSDDTVQPSKLISELLLSSNLTKQEGDGLSITSEGFKFLLKDVYTQIWTLLIVYLDDLEKKKGKGSGSRNDLLSFLFRLSFLNLGRGYLVSELSEQQKEYLFALKQFGLIYMRTDSSILFYPTRLIISLTTGKTLSLIQSISSERTQTQKEQGYIVLETNYRLYAYTSSSLQISLLSLFVKMLYRLPNLAVGIITRESIRTALIHGITADQIIDFVRHNSHPNAANSGQPIPDVVAEQILLWEAERNRITYTKSVLYNSFPTNDCYIATLKFAKEQDYYIWSHDPLKTLVVKEEGNDPIRNFIKKNFA.

The tract at residues 93–117 (PQQQQSSQQSSSQQQQQQQQQQQQT) is disordered. A compositionally biased stretch (low complexity) spans 94–116 (QQQQSSQQSSSQQQQQQQQQQQQ).

Belongs to the TFB2 family. Component of the 7-subunit TFIIH core complex composed of XPB/repB, XPD/repD, gtf2h1, gtf2h2, gtf2h3, gtf2h4 and gtf2h5, which is active in NER. The core complex associates with the 3-subunit CDK-activating kinase (CAK) module composed of cycH/cyclin H, cdk7 and mnat1 to form the 10-subunit holoenzyme (holo-TFIIH) active in transcription.

The protein resides in the nucleus. In terms of biological role, component of the general transcription and DNA repair factor IIH (TFIIH) core complex, which is involved in general and transcription-coupled nucleotide excision repair (NER) of damaged DNA and, when complexed to CAK, in RNA transcription by RNA polymerase II. In NER, TFIIH acts by opening DNA around the lesion to allow the excision of the damaged oligonucleotide and its replacement by a new DNA fragment. In transcription, TFIIH has an essential role in transcription initiation. When the pre-initiation complex (PIC) has been established, TFIIH is required for promoter opening and promoter escape. Phosphorylation of the C-terminal tail (CTD) of the largest subunit of RNA polymerase II by the kinase module CAK controls the initiation of transcription. The polypeptide is General transcription factor IIH subunit 4 (gtf2h4) (Dictyostelium discoideum (Social amoeba)).